The primary structure comprises 579 residues: Leucine-rich repeat-containing protein 15 (579 aa).

The N-terminal stretch at 1–21 is a signal peptide; the sequence is MPLKHYLLLLVSCQAWAAGLA. The LRRNT domain maps to 22 to 53; that stretch reads YYGCPSECTCSRASQVECTGAQIVAMPSPLPW. The Extracellular segment spans residues 22 to 536; sequence YYGCPSECTC…TWGMTDAQSG (515 aa). LRR repeat units lie at residues 54-75, 78-99, 102-123, 126-147, 150-171, 174-195, 198-219, 222-243, 246-267, 270-291, 294-315, 318-339, 342-363, 366-387, and 390-411; these read NAMSLQILNTHITELPEDKFLN, ALIALKMEKNELANIMPGAFRN, SLRHLSLANNKLKNLPVRLFQD, NLETLLLSNNQLVQIQPAQFSQ, NLKELQLYGNNLEYIPEGVFDH, GLTKLNLGNNGFTHLSPRVFQH, NLQVLRLYENRLSDIPMGTFDA, NLQELALQENQIGTLSPGLFHN, NLQRLYLSNNHISHLPPGIFMQ, HLNKLTLFGNSLKELSPGVFGP, NLRELWLYNNHITSLPDNAFSH, QLQVLILSHNQLSYISPGAFNG, NLRELSLHTNALQDLDGNVFRS, NLRNVSLQNNRLRQLPGSIFAN, and GLMTIQLQNNNLENLPLGIFDH. The N-linked (GlcNAc...) asparagine glycan is linked to asparagine 75. N-linked (GlcNAc...) asparagine glycosylation is present at asparagine 369. The region spanning 423–473 is the LRRCT domain; sequence NPWRCDSNILPLHDWLILNRARLGTDTLPVCSSPASVRGQSLVIINVNFPG. A disordered region spans residues 476–509; that stretch reads VQGPETPEVSSYPDTSSYPDSTSISSTTEITRST. The segment covering 485–506 has biased composition (low complexity); it reads SSYPDTSSYPDSTSISSTTEIT. The helical transmembrane segment at 537-557 threads the bilayer; it reads LAIAAIVIGIIALACSLAACI. The Cytoplasmic segment spans residues 558–579; that stretch reads CCCCCKKRSQAVLMQMKAPNEC.

As to expression, expressed in chodrocytes (at protein level).

It localises to the cell membrane. In Mus musculus (Mouse), this protein is Leucine-rich repeat-containing protein 15 (Lrrc15).